The chain runs to 261 residues: Cytochrome c oxidase subunit 3 (261 aa).

Residues 1-15 lie on the Mitochondrial matrix side of the membrane; sequence MAHQAHSYHMVDPSP. Residues 16-34 form a helical membrane-spanning segment; the sequence is WPIFGAAAALLTTSGLIMW. Residues 35-40 lie on the Mitochondrial intermembrane side of the membrane; it reads FHYSST. A helical transmembrane segment spans residues 41–66; the sequence is TLLTMGLLSMLLVMLQWWRDVVREST. The Mitochondrial matrix segment spans residues 67-72; that stretch reads FQGHHT. Residues 73 to 105 traverse the membrane as a helical segment; it reads PTVQKGLRYGMILFITSEAFFFLGFFWAFFHSS. Topologically, residues 106 to 128 are mitochondrial intermembrane; sequence LAPTPELGGQWPPTGVKPLNPLE. The chain crosses the membrane as a helical span at residues 129–152; it reads VPLLNTAILLASGVTVTWAHHSIT. Over 153–155 the chain is Mitochondrial matrix; it reads EGN. A helical transmembrane segment spans residues 156 to 183; sequence RKQAIHALTLTILLGFYFTALQAMEYHE. The Mitochondrial intermembrane portion of the chain corresponds to 184–190; sequence ASFSIAD. The helical transmembrane segment at 191-223 threads the bilayer; it reads SVYGSTFFVATGFHGLHVIIGSSFLTVCLLRLI. Topologically, residues 224–232 are mitochondrial matrix; it reads KFHFTPNHH. Residues 233 to 256 form a helical membrane-spanning segment; the sequence is FGFEAAAWYWHFVDIIWLFLYMSM. Residues 257–261 are Mitochondrial intermembrane-facing; that stretch reads YWWGS.

The protein belongs to the cytochrome c oxidase subunit 3 family. As to quaternary structure, component of the cytochrome c oxidase (complex IV, CIV), a multisubunit enzyme composed of 14 subunits. The complex is composed of a catalytic core of 3 subunits MT-CO1, MT-CO2 and MT-CO3, encoded in the mitochondrial DNA, and 11 supernumerary subunits COX4I, COX5A, COX5B, COX6A, COX6B, COX6C, COX7A, COX7B, COX7C, COX8 and NDUFA4, which are encoded in the nuclear genome. The complex exists as a monomer or a dimer and forms supercomplexes (SCs) in the inner mitochondrial membrane with NADH-ubiquinone oxidoreductase (complex I, CI) and ubiquinol-cytochrome c oxidoreductase (cytochrome b-c1 complex, complex III, CIII), resulting in different assemblies (supercomplex SCI(1)III(2)IV(1) and megacomplex MCI(2)III(2)IV(2)).

Its subcellular location is the mitochondrion inner membrane. It carries out the reaction 4 Fe(II)-[cytochrome c] + O2 + 8 H(+)(in) = 4 Fe(III)-[cytochrome c] + 2 H2O + 4 H(+)(out). In terms of biological role, component of the cytochrome c oxidase, the last enzyme in the mitochondrial electron transport chain which drives oxidative phosphorylation. The respiratory chain contains 3 multisubunit complexes succinate dehydrogenase (complex II, CII), ubiquinol-cytochrome c oxidoreductase (cytochrome b-c1 complex, complex III, CIII) and cytochrome c oxidase (complex IV, CIV), that cooperate to transfer electrons derived from NADH and succinate to molecular oxygen, creating an electrochemical gradient over the inner membrane that drives transmembrane transport and the ATP synthase. Cytochrome c oxidase is the component of the respiratory chain that catalyzes the reduction of oxygen to water. Electrons originating from reduced cytochrome c in the intermembrane space (IMS) are transferred via the dinuclear copper A center (CU(A)) of subunit 2 and heme A of subunit 1 to the active site in subunit 1, a binuclear center (BNC) formed by heme A3 and copper B (CU(B)). The BNC reduces molecular oxygen to 2 water molecules using 4 electrons from cytochrome c in the IMS and 4 protons from the mitochondrial matrix. The protein is Cytochrome c oxidase subunit 3 (MT-CO3) of Gallus gallus (Chicken).